A 164-amino-acid chain; its full sequence is Respiratory growth induced protein 2 (164 aa).

Belongs to the RGI1 family.

It localises to the cytoplasm. Involved in the control of energetic metabolism and significantly contribute to cell fitness, especially under respiratory growth conditions. The chain is Respiratory growth induced protein 2 (RGI2) from Saccharomyces cerevisiae (strain JAY291) (Baker's yeast).